A 611-amino-acid polypeptide reads, in one-letter code: Protein Spindly-A (611 aa).

Residues Met1–Leu390 are a coiled coil. The segment at Thr487 to Gln611 is disordered. Positions Thr493–Asp511 are enriched in basic and acidic residues. Residues His552–Asp567 show a composition bias toward polar residues. Residues Ser570 to Lys583 show a composition bias toward basic and acidic residues. Residues Pro602–Gln611 show a composition bias toward polar residues.

Belongs to the Spindly family.

It localises to the chromosome. The protein resides in the centromere. Its subcellular location is the kinetochore. Functionally, required for the localization of dynein and dynactin to the mitotic kintochore. Dynein is believed to control the initial lateral interaction between the kinetochore and spindle microtubules and to facilitate the subsequent formation of end-on kinetochore-microtubule attachments mediated by the NDC80 complex. The chain is Protein Spindly-A (spdl1-a) from Xenopus laevis (African clawed frog).